The primary structure comprises 485 residues: Glutamate--tRNA ligase (485 aa).

The short motif at 11–21 (PSPTGYMHVGN) is the 'HIGH' region element. 4 residues coordinate Zn(2+): Cys108, Cys110, Cys135, and Asp137. Positions 252–256 (KLSKR) match the 'KMSKS' region motif. Lys255 contacts ATP.

The protein belongs to the class-I aminoacyl-tRNA synthetase family. Glutamate--tRNA ligase type 1 subfamily. Monomer. The cofactor is Zn(2+).

It is found in the cytoplasm. It catalyses the reaction tRNA(Glu) + L-glutamate + ATP = L-glutamyl-tRNA(Glu) + AMP + diphosphate. Catalyzes the attachment of glutamate to tRNA(Glu) in a two-step reaction: glutamate is first activated by ATP to form Glu-AMP and then transferred to the acceptor end of tRNA(Glu). The sequence is that of Glutamate--tRNA ligase from Clostridium botulinum (strain ATCC 19397 / Type A).